We begin with the raw amino-acid sequence, 205 residues long: Large ribosomal subunit protein uL3 (205 aa).

Belongs to the universal ribosomal protein uL3 family. In terms of assembly, part of the 50S ribosomal subunit. Forms a cluster with proteins L14 and L19.

Its function is as follows. One of the primary rRNA binding proteins, it binds directly near the 3'-end of the 23S rRNA, where it nucleates assembly of the 50S subunit. The protein is Large ribosomal subunit protein uL3 of Bacteroides fragilis (strain ATCC 25285 / DSM 2151 / CCUG 4856 / JCM 11019 / LMG 10263 / NCTC 9343 / Onslow / VPI 2553 / EN-2).